The primary structure comprises 454 residues: Flagellum-specific ATP synthase (454 aa).

Residue 182 to 189 (ASSGLGKS) participates in ATP binding.

This sequence belongs to the ATPase alpha/beta chains family.

Its subcellular location is the cytoplasm. It carries out the reaction ATP + H2O + 4 H(+)(in) = ADP + phosphate + 5 H(+)(out). Functionally, probable catalytic subunit of a protein translocase for flagellum-specific export, or a proton translocase involved in local circuits at the flagellum. May be involved in a specialized protein export pathway that proceeds without signal peptide cleavage. The polypeptide is Flagellum-specific ATP synthase (fliI) (Buchnera aphidicola subsp. Baizongia pistaciae (strain Bp)).